The following is a 347-amino-acid chain: Zinc finger protein CONSTANS-LIKE 2 (347 aa).

Zn(2+) is bound by residues cysteine 16, cysteine 19, cysteine 39, histidine 44, cysteine 59, cysteine 62, cysteine 82, and histidine 87. The B box-type 1; atypical zinc finger occupies 16–58 (CDTCRSAACTVYCEADSAYLCTTCDARVHAANRVASRHERVRV). A B box-type 2; atypical zinc finger spans residues 59 to 101 (CQSCESAPAAFLCKADAASLCTACDAEIHSANPLARRHQRVPI). The CCT domain maps to 278–320 (REARVLRYREKKKTRKFDKTIRYASRKAYAEIRPRIKGRFAKR).

Belongs to the CONSTANS family. Highly expressed in leaves. Expressed at lower levels in stems, flowers and siliques. Not detected in roots.

The protein resides in the nucleus. Functionally, putative transcription factor. Does not affect flowering time. This is Zinc finger protein CONSTANS-LIKE 2 (COL2) from Arabidopsis thaliana (Mouse-ear cress).